The following is a 455-amino-acid chain: Protein 60A (455 aa).

The N-terminal stretch at 1–36 (MSGLRNTSEAVAVLASLGLGMVLLMFVATTPPAVEA) is a signal peptide. A propeptide spanning residues 37 to 335 (TQSGIYIDNG…SASHPRKRKK (299 aa)) is cleaved from the precursor. Residues 108 to 118 (GLSDQDEDDDY) show a composition bias toward acidic residues. The interval 108-138 (GLSDQDEDDDYERGHRSRRSADLEEDEGEQQ) is disordered. N238 and N250 each carry an N-linked (GlcNAc...) asparagine glycan. The disordered stretch occupies residues 316–345 (AHSSHHRSKRSASHPRKRKKSVSPNNVPLL). Residues 318-336 (SSHHRSKRSASHPRKRKKS) are compositionally biased toward basic residues. 3 disulfide bridges follow: C354–C420, C383–C452, and C387–C454. N396 is a glycosylation site (N-linked (GlcNAc...) asparagine).

Belongs to the TGF-beta family. As to quaternary structure, homodimer; disulfide-linked. Interacts with nord and dpp. In terms of tissue distribution, expressed in cells of the developing foregut and hindgut during germ band retraction and later embryonic stages. Expressed in the wing disk, mainly in the posterior compartment in the pteropleural and medial regions extending into the progenitors of the scutellum. High levels are found within the posterior and anterior compartments of the wing pouch and low levels in the hinge region. In the eye/antennal disk, expression is highest anterior to the morphogenetic furrow and in the medial regions with lower levels of expression posterior to the morphogenetic furrow. Expressed throughout the posterior compartment of the leg imaginal disks and within the ventral anterior compartment.

It is found in the secreted. Its function is as follows. Required for the growth of imaginal tissues and for patterning of the adult wing. The sequence is that of Protein 60A (gbb) from Drosophila melanogaster (Fruit fly).